The following is a 552-amino-acid chain: Antibiotic resistance protein MAB_2355c (552 aa).

2 ABC transporter domains span residues 4–270 (VQLD…RRWD) and 332–552 (AKRA…PQWV). ATP contacts are provided by residues 37–44 (GPNGTGKT) and 364–371 (GGNGTGKS).

Belongs to the ABC transporter superfamily. ABCF family.

The catalysed reaction is ATP + H2O = ADP + phosphate + H(+). The ATPase activity can be inhibited by ribosome-targeting antibiotics. Exhibits ATP hydrolysis activity and contributes to macrolide resistance by ribosome protection. Can also hydrolyze GTP, TTP and CTP but to a lesser extent than ATP. In vitro, rescues the transcription and translation activities affected by macrolides. Increased expression correlates with increased resistance to clarithromycin, one of the main drugs used to treat M.abscessus. The polypeptide is Antibiotic resistance protein MAB_2355c (Mycobacteroides abscessus (strain ATCC 19977 / DSM 44196 / CCUG 20993 / CIP 104536 / JCM 13569 / NCTC 13031 / TMC 1543 / L948) (Mycobacterium abscessus)).